The following is a 499-amino-acid chain: Aspartyl/glutamyl-tRNA(Asn/Gln) amidotransferase subunit B (499 aa).

Belongs to the GatB/GatE family. GatB subfamily. As to quaternary structure, heterotrimer of A, B and C subunits.

It carries out the reaction L-glutamyl-tRNA(Gln) + L-glutamine + ATP + H2O = L-glutaminyl-tRNA(Gln) + L-glutamate + ADP + phosphate + H(+). It catalyses the reaction L-aspartyl-tRNA(Asn) + L-glutamine + ATP + H2O = L-asparaginyl-tRNA(Asn) + L-glutamate + ADP + phosphate + 2 H(+). Functionally, allows the formation of correctly charged Asn-tRNA(Asn) or Gln-tRNA(Gln) through the transamidation of misacylated Asp-tRNA(Asn) or Glu-tRNA(Gln) in organisms which lack either or both of asparaginyl-tRNA or glutaminyl-tRNA synthetases. The reaction takes place in the presence of glutamine and ATP through an activated phospho-Asp-tRNA(Asn) or phospho-Glu-tRNA(Gln). The sequence is that of Aspartyl/glutamyl-tRNA(Asn/Gln) amidotransferase subunit B from Salinispora arenicola (strain CNS-205).